Here is a 198-residue protein sequence, read N- to C-terminus: Holliday junction branch migration complex subunit RuvA (198 aa).

The interval 1–64 (MYEYIKGEYM…EDFIGLYGFE (64 aa)) is domain I. The tract at residues 65 to 143 (SLEELEMFKM…TDELLNCIDE (79 aa)) is domain II. Residues 144–154 (FDDVTQDNSLA) form a flexible linker region. Residues 154–198 (AVSEALSALISLGYTEKEAEKVLRDVDKSESVENIIKSALVKLMG) form a domain III region.

This sequence belongs to the RuvA family. Homotetramer. Forms an RuvA(8)-RuvB(12)-Holliday junction (HJ) complex. HJ DNA is sandwiched between 2 RuvA tetramers; dsDNA enters through RuvA and exits via RuvB. An RuvB hexamer assembles on each DNA strand where it exits the tetramer. Each RuvB hexamer is contacted by two RuvA subunits (via domain III) on 2 adjacent RuvB subunits; this complex drives branch migration. In the full resolvosome a probable DNA-RuvA(4)-RuvB(12)-RuvC(2) complex forms which resolves the HJ.

It localises to the cytoplasm. Its function is as follows. The RuvA-RuvB-RuvC complex processes Holliday junction (HJ) DNA during genetic recombination and DNA repair, while the RuvA-RuvB complex plays an important role in the rescue of blocked DNA replication forks via replication fork reversal (RFR). RuvA specifically binds to HJ cruciform DNA, conferring on it an open structure. The RuvB hexamer acts as an ATP-dependent pump, pulling dsDNA into and through the RuvAB complex. HJ branch migration allows RuvC to scan DNA until it finds its consensus sequence, where it cleaves and resolves the cruciform DNA. This Clostridium botulinum (strain Eklund 17B / Type B) protein is Holliday junction branch migration complex subunit RuvA.